Reading from the N-terminus, the 133-residue chain is Large ribosomal subunit protein uL22 (133 aa).

This sequence belongs to the universal ribosomal protein uL22 family. As to quaternary structure, part of the 50S ribosomal subunit.

Its function is as follows. This protein binds specifically to 23S rRNA; its binding is stimulated by other ribosomal proteins, e.g. L4, L17, and L20. It is important during the early stages of 50S assembly. It makes multiple contacts with different domains of the 23S rRNA in the assembled 50S subunit and ribosome. In terms of biological role, the globular domain of the protein is located near the polypeptide exit tunnel on the outside of the subunit, while an extended beta-hairpin is found that lines the wall of the exit tunnel in the center of the 70S ribosome. In Aquifex pyrophilus, this protein is Large ribosomal subunit protein uL22.